We begin with the raw amino-acid sequence, 191 residues long: Protein YceI (191 aa).

The N-terminal stretch at 1 to 22 is a signal peptide; sequence MKKNLLGFTLASLLFTTGSAVA.

It belongs to the UPF0312 family. Type 1 subfamily.

It localises to the periplasm. In Salmonella dublin (strain CT_02021853), this protein is Protein YceI.